The primary structure comprises 95 residues: RING finger protein Z (95 aa).

Over residues 1-16 the composition is skewed to low complexity; that stretch reads MGNSKSKSNPSSSSES. A disordered region spans residues 1-23; sequence MGNSKSKSNPSSSSESQKGAPTV. Gly2 is lipidated: N-myristoyl glycine; by host. The RING-type; atypical zinc-finger motif lies at 40-76; sequence CKCCWFADKNLIKCSDHYLCLRCLNVMLKNSDLCNIC. Positions 90-93 match the PTAP/PSAP motif motif; that stretch reads PSAP.

It belongs to the arenaviridae Z protein family. As to quaternary structure, interacts with protein NP; this interaction probably directs the encapsidated genome to budding sites. Interacts (via RING domain) with polymerase L; this interaction inhibits viral transcription and replication, Z partially blocks the product exit tunnel for the releasing nascent RNA product. Interacts with the glycoprotein complex; this interaction plays a role in virion budding. Interacts with host eIF4E; this interaction results in eIF4E reduced affinity for its substrate, the 5'-m7 G cap structure. Interacts (via late-budding domain) with host TSG101; this interaction is essential for budding and release of viral particles. Interacts with host RPLP0; this interaction may serve to load ribosome-like particles inside the virion. Interacts with host PML; this interaction induces PML bodies redistribution in the cytoplasm upon viral infection. Myristoylation is required for the role of RING finger protein Z in assembly and budding.

The protein localises to the virion. It is found in the host cytoplasm. It localises to the host perinuclear region. The protein resides in the host cell membrane. In terms of biological role, plays a crucial role in virion assembly and budding. Expressed late in the virus life cycle, it acts as an inhibitor of viral transcription and RNA synthesis by interacting with the viral polymerase L. Presumably recruits the NP encapsidated genome to cellular membranes at budding sites via direct interaction with NP. Plays critical roles in the final steps of viral release by interacting with host TSG101, a member of the vacuolar protein-sorting pathway and using other cellular host proteins involved in vesicle formation pathway. The budding of the virus progeny occurs after association of protein Z with the viral glycoprotein complex SSP-GP1-GP2 at the cell periphery, step that requires myristoylation of protein Z. Also selectively represses protein production by associating with host eIF4E. In cell-based minigenome assay, has an inhibitory effect on the ribonucleoprotein machinery (vRNP), which is responsible for the replication and transcription of the viral genome. In Guanarito mammarenavirus (isolate Human/Venezuela/NH-95551/1990) (GTOV), this protein is RING finger protein Z.